The chain runs to 568 residues: 2-succinyl-5-enolpyruvyl-6-hydroxy-3-cyclohexene-1-carboxylate synthase (568 aa).

It belongs to the TPP enzyme family. MenD subfamily. In terms of assembly, homodimer. Mg(2+) is required as a cofactor. Mn(2+) serves as cofactor. Requires thiamine diphosphate as cofactor.

It carries out the reaction isochorismate + 2-oxoglutarate + H(+) = 5-enolpyruvoyl-6-hydroxy-2-succinyl-cyclohex-3-ene-1-carboxylate + CO2. It functions in the pathway quinol/quinone metabolism; 1,4-dihydroxy-2-naphthoate biosynthesis; 1,4-dihydroxy-2-naphthoate from chorismate: step 2/7. The protein operates within quinol/quinone metabolism; menaquinone biosynthesis. Functionally, catalyzes the thiamine diphosphate-dependent decarboxylation of 2-oxoglutarate and the subsequent addition of the resulting succinic semialdehyde-thiamine pyrophosphate anion to isochorismate to yield 2-succinyl-5-enolpyruvyl-6-hydroxy-3-cyclohexene-1-carboxylate (SEPHCHC). In Haemophilus influenzae (strain ATCC 51907 / DSM 11121 / KW20 / Rd), this protein is 2-succinyl-5-enolpyruvyl-6-hydroxy-3-cyclohexene-1-carboxylate synthase.